We begin with the raw amino-acid sequence, 244 residues long: MPSLLLQLPLRLCRLWPHSLSIRLLTAATGQRSVPTNYYELLGVHPGASAEEIKRAFFTKSKELHPDRDPGNPALHSRFVELNEAYRVLSREESRRNYDHQLHSASPPKSSGSTAEPKYTQQTHSSWEPPNAQYWAQFHSVRPQGPESRKQQRKHNQRVLGYCLLLMVAGMGLHYVAFRKLEQVHRSFMDEKDRIITAIYNDTRARARANRARIQQERQQRQQPRAEPSLPPESSRIMPQDTSP.

The 66-residue stretch at 37–102 (NYYELLGVHP…ESRRNYDHQL (66 aa)) folds into the J domain. The segment at 96-127 (RNYDHQLHSASPPKSSGSTAEPKYTQQTHSSW) is disordered. The span at 103 to 127 (HSASPPKSSGSTAEPKYTQQTHSSW) shows a compositional bias: polar residues. The helical transmembrane segment at 159-178 (VLGYCLLLMVAGMGLHYVAF) threads the bilayer. The tract at residues 208–244 (RANRARIQQERQQRQQPRAEPSLPPESSRIMPQDTSP) is disordered.

The protein localises to the membrane. The protein is DnaJ homolog subfamily C member 4 (Dnajc4) of Mus musculus (Mouse).